The sequence spans 59 residues: Large ribosomal subunit protein bL32 (59 aa).

A compositionally biased stretch (basic residues) spans 1 to 16; that stretch reads MAVPKRKVSPHRRGNR. The tract at residues 1–20 is disordered; that stretch reads MAVPKRKVSPHRRGNRRAHD.

It belongs to the bacterial ribosomal protein bL32 family.

This is Large ribosomal subunit protein bL32 from Erythrobacter litoralis (strain HTCC2594).